Consider the following 629-residue polypeptide: tRNA uridine 5-carboxymethylaminomethyl modification enzyme MnmG (629 aa).

Residues 15–20, Val-127, and Ser-182 each bind FAD; that span reads GAGHAG. Positions 203–226 are disordered; it reads TPPRVKSSTIDYSKTEEQPGDDHP. Over residues 215-226 the composition is skewed to basic and acidic residues; sequence SKTEEQPGDDHP. 274–288 provides a ligand contact to NAD(+); it reads GARYCPSIEDKIVRF. Residue Gln-371 participates in FAD binding.

The protein belongs to the MnmG family. As to quaternary structure, homodimer. Heterotetramer of two MnmE and two MnmG subunits. FAD serves as cofactor.

Its subcellular location is the cytoplasm. Functionally, NAD-binding protein involved in the addition of a carboxymethylaminomethyl (cmnm) group at the wobble position (U34) of certain tRNAs, forming tRNA-cmnm(5)s(2)U34. The polypeptide is tRNA uridine 5-carboxymethylaminomethyl modification enzyme MnmG (Listeria innocua serovar 6a (strain ATCC BAA-680 / CLIP 11262)).